The following is a 308-amino-acid chain: Olfactory receptor 2T7 (308 aa).

At 1–17 the chain is on the extracellular side; the sequence is MPTLSFWVCSATPVSPG. Residues 18–40 traverse the membrane as a helical segment; that stretch reads FFALILLVFVTSIASNVVKIILI. At 41–51 the chain is on the cytoplasmic side; that stretch reads HIDSRLHTPMY. A helical membrane pass occupies residues 52 to 74; the sequence is FLLSQLSLRDILYISTIVPKMLV. Residues 75-88 lie on the Extracellular side of the membrane; the sequence is DQVMSQRAISFAGC. A disulfide bridge links cysteine 88 with cysteine 170. The helical transmembrane segment at 89-109 threads the bilayer; sequence TAQHFLYLTLAGAEFFLLGLM. At 110-130 the chain is on the cytoplasmic side; sequence SCDRYVAICNPLHYPDLMSRK. A helical transmembrane segment spans residues 131–151; the sequence is ICWLIVAAAWLGGSIDGFLLT. Over 152-188 the chain is Extracellular; that stretch reads PVTMQFPFCASREINHFFCEVPALLKLSCTDTSAYET. The helical transmembrane segment at 189–209 threads the bilayer; the sequence is AMYVCCIMMLLIPFSVISGSY. Residues 210 to 235 are Cytoplasmic-facing; the sequence is TRILITVYRMSEAEGRRKAVATCSSH. A helical membrane pass occupies residues 236-256; that stretch reads MVVVSLFYGAAMYTYVLPHSY. Residues 257–262 are Extracellular-facing; sequence HTPEQD. A helical transmembrane segment spans residues 263–283; that stretch reads KAVSAFYTILTPMLNPLIYSL. At 284 to 308 the chain is on the cytoplasmic side; sequence RNKDVTGALQKVVGRCVSSGKVTTF.

This sequence belongs to the G-protein coupled receptor 1 family.

The protein localises to the cell membrane. Its function is as follows. Odorant receptor. This Homo sapiens (Human) protein is Olfactory receptor 2T7 (OR2T7).